A 196-amino-acid polypeptide reads, in one-letter code: uncharacterized protein (196 aa).

A compositionally biased stretch (basic and acidic residues) spans 21 to 35 (ESRRKDGSVRRERAV). Disordered stretches follow at residues 21–53 (ESRR…PGRG) and 65–196 (LQLS…KEKE). Residues 66 to 75 (QLSNDASTSK) are compositionally biased toward polar residues. 3 stretches are compositionally biased toward basic and acidic residues: residues 84–94 (ELEKEKLERPL), 100–143 (EKND…KDFK), and 173–196 (KMSK…KEKE).

This is an uncharacterized protein from Schizosaccharomyces pombe (strain 972 / ATCC 24843) (Fission yeast).